The primary structure comprises 540 residues: Suppressor of tumorigenicity 7 protein-like (540 aa).

4 consecutive transmembrane segments (helical) span residues Trp-24–Leu-44, Phe-68–Trp-88, Leu-475–Leu-495, and Leu-502–Ala-522.

It belongs to the ST7 family.

Its subcellular location is the membrane. The polypeptide is Suppressor of tumorigenicity 7 protein-like (st7l) (Danio rerio (Zebrafish)).